The primary structure comprises 284 residues: Bifunctional protein FolD (284 aa).

Residues 164 to 166 and Ser-189 each bind NADP(+); that span reads GRS.

The protein belongs to the tetrahydrofolate dehydrogenase/cyclohydrolase family. In terms of assembly, homodimer.

It carries out the reaction (6R)-5,10-methylene-5,6,7,8-tetrahydrofolate + NADP(+) = (6R)-5,10-methenyltetrahydrofolate + NADPH. It catalyses the reaction (6R)-5,10-methenyltetrahydrofolate + H2O = (6R)-10-formyltetrahydrofolate + H(+). It functions in the pathway one-carbon metabolism; tetrahydrofolate interconversion. In terms of biological role, catalyzes the oxidation of 5,10-methylenetetrahydrofolate to 5,10-methenyltetrahydrofolate and then the hydrolysis of 5,10-methenyltetrahydrofolate to 10-formyltetrahydrofolate. This chain is Bifunctional protein FolD, found in Listeria monocytogenes serotype 4a (strain HCC23).